Reading from the N-terminus, the 440-residue chain is D-serine dehydratase (440 aa).

An N6-(pyridoxal phosphate)lysine modification is found at lysine 116.

Belongs to the serine/threonine dehydratase family. DsdA subfamily. Monomer. Pyridoxal 5'-phosphate is required as a cofactor.

The catalysed reaction is D-serine = pyruvate + NH4(+). This chain is D-serine dehydratase, found in Salmonella agona (strain SL483).